A 520-amino-acid chain; its full sequence is Amine oxidase [flavin-containing] B (520 aa).

An N-acetylserine modification is found at Ser2. The Cytoplasmic segment spans residues Ser2–Val489. Lys52 bears the N6-acetyllysine mark. Cys397 carries the S-8alpha-FAD cysteine modification. A helical; Anchor for type IV membrane protein membrane pass occupies residues Pro490 to Leu516. Over Leu517–Ile520 the chain is Mitochondrial intermembrane.

As to quaternary structure, monomer, homo- or heterodimer (containing two subunits of similar size). Each subunit contains a covalently bound flavin. Enzymatically active as monomer. Requires FAD as cofactor.

Its subcellular location is the mitochondrion outer membrane. It catalyses the reaction a secondary aliphatic amine + O2 + H2O = a primary amine + an aldehyde + H2O2. The catalysed reaction is a primary methyl amine + O2 + H2O = an aldehyde + H2O2 + NH4(+). The enzyme catalyses benzylamine + O2 + H2O = benzaldehyde + H2O2 + NH4(+). It carries out the reaction (R)-adrenaline + O2 + H2O = (R)-3,4-dihydroxymandelaldehyde + methylamine + H2O2. It catalyses the reaction dopamine + O2 + H2O = 3,4-dihydroxyphenylacetaldehyde + H2O2 + NH4(+). The catalysed reaction is tyramine + O2 + H2O = (4-hydroxyphenyl)acetaldehyde + H2O2 + NH4(+). The enzyme catalyses (R)-noradrenaline + O2 + H2O = (R)-3,4-dihydroxymandelaldehyde + H2O2 + NH4(+). It carries out the reaction 2-phenylethylamine + O2 + H2O = 2-phenylacetaldehyde + H2O2 + NH4(+). It catalyses the reaction N-acetylputrescine + O2 + H2O = 4-acetamidobutanal + H2O2 + NH4(+). In terms of biological role, catalyzes the oxidative deamination of primary and some secondary amines such as neurotransmitters, and exogenous amines including the tertiary amine, neurotoxin 1-methyl-4-phenyl-1,2,3,6-tetrahydropyridine (MPTP), with concomitant reduction of oxygen to hydrogen peroxide and participates in the metabolism of neuroactive and vasoactive amines in the central nervous system and peripheral tissues. Preferentially degrades benzylamine and phenylethylamine. The polypeptide is Amine oxidase [flavin-containing] B (Bos taurus (Bovine)).